The chain runs to 300 residues: Meiosis-specific cyclin crs1 (300 aa).

Residues 61–183 form the Cyclin N-terminal domain; sequence IIEQEKKGLT…VLALLNFDIY (123 aa).

The protein belongs to the cyclin family. Cyclin AB subfamily.

It localises to the cytoplasm. Its subcellular location is the nucleus. Functionally, has a role in meiotic chromosome segregation. This Schizosaccharomyces pombe (strain 972 / ATCC 24843) (Fission yeast) protein is Meiosis-specific cyclin crs1 (crs1).